We begin with the raw amino-acid sequence, 218 residues long: Very-long-chain (3R)-3-hydroxyacyl-CoA dehydratase (218 aa).

Topologically, residues 1–6 (MKTYLS) are cytoplasmic. A helical transmembrane segment spans residues 7-29 (IYYLIQFCGHSWIFTNMTTRFLF). Residues 30 to 38 (FGQDAFADT) are Lumenal-facing. A helical membrane pass occupies residues 39–61 (FYSIGLVMQGCQLLSILELAHIL). Topologically, residues 62-67 (LGVEQN) are cytoplasmic. The helical transmembrane segment at 68–87 (GFLPMFLQVAERFIILFVVI) threads the bilayer. Topologically, residues 88 to 96 (TSQEEVQSK) are lumenal. A helical membrane pass occupies residues 97-116 (YIVCALFFIWNLWDVIRYPY). Topologically, residues 117-136 (DMLAAVDTDYSALTWLRHTW) are cytoplasmic. Residues 137 to 159 (WIVAYPLSVLAEAYTIYESLPYF) traverse the membrane as a helical segment. Residues Tyr141 and Glu148 contribute to the active site. Over 160 to 178 (ESLGTYSFKMALPVSLSFH) the chain is Lumenal. A helical transmembrane segment spans residues 179-201 (FPYILTLYLVLQPVGMLYICSCL). The Cytoplasmic segment spans residues 202–218 (WSERKQYFQRKLKLKKN).

This sequence belongs to the very long-chain fatty acids dehydratase HACD family.

It localises to the endoplasmic reticulum membrane. It carries out the reaction a very-long-chain (3R)-3-hydroxyacyl-CoA = a very-long-chain (2E)-enoyl-CoA + H2O. The catalysed reaction is (3R)-hydroxyhexadecanoyl-CoA = (2E)-hexadecenoyl-CoA + H2O. It functions in the pathway lipid metabolism; fatty acid biosynthesis. In terms of biological role, catalyzes the third of the four reactions of the long-chain fatty acids elongation cycle. This endoplasmic reticulum-bound enzymatic process, allows the addition of two carbons to the chain of long- and very long-chain fatty acids/VLCFAs per cycle. This enzyme catalyzes the dehydration of the 3-hydroxyacyl-CoA intermediate into trans-2,3-enoyl-CoA, within each cycle of fatty acid elongation. Thereby, it participates in the production of VLCFAs of different chain lengths that are involved in multiple biological processes as precursors of membrane lipids and lipid mediators. This chain is Very-long-chain (3R)-3-hydroxyacyl-CoA dehydratase, found in Xenopus laevis (African clawed frog).